The sequence spans 678 residues: MPDPATYRPAPGSIPVEPGVYRFRDPHGRVIYVGKAKSLRSRLNSYFADISGLAPRTRQMVMTASSVEWTVVGTEVEALQLEYNWIKEFDPRFNIRYRDDKSYPVLAVTLNEEYPRLKVYRGPRRKGVRYFGPYSHAWAIRETVDLLTRVFPARTCSNGVFKRHSQIDRPCLLGYIDKCSAPCVGRVSAEQHRQIVQDFCDFLAGKTDRLIREMEQQMTAAAEDLDFERAARLRDNIGAMRRAMEKQTVVLGDGTDADVVAFADDELEAAVQVFHVRGGRVRGQRGWVIEKSGEPGESTLEYLVEQFLTQFYGDQAELGGASDAGGDEASNPVPKQVLVPVLPETTDELETWLSQLRGSRVALRVPQRGDKRALAETVKRNAEGALNQHKLKRAGDFTARSAALQSIQENLGLQDAPLRIECIDISHVQGTDVVASLVVFEDGLPRKSDYRHFAIREAAGDGRSDDVASIAEVTRRRFHRHLRDMQEPGEMVAEGRSRRFAYPPNLFVVDGGAPQVNAAQAVLDDLGISDVAVIGLAKRLEEVWVPNLDGTAPDPIIFPRNSDGLYLLQRVRDEAHRFAISYHRSKRSKRMTASALDSVRGLGEHRRKALVTHFGSLARLKQATVEEITEVPGIGAATARAVLDALGIEAPPEPGAEAPPDSGAAAAVMGNDQSRVPG.

The GIY-YIG domain maps to valine 16 to isoleucine 95. The 36-residue stretch at aspartate 208–alanine 243 folds into the UVR domain. Residues glutamate 649–alanine 667 are compositionally biased toward low complexity. A disordered region spans residues glutamate 649–glycine 678.

It belongs to the UvrC family. As to quaternary structure, interacts with UvrB in an incision complex.

The protein localises to the cytoplasm. The UvrABC repair system catalyzes the recognition and processing of DNA lesions. UvrC both incises the 5' and 3' sides of the lesion. The N-terminal half is responsible for the 3' incision and the C-terminal half is responsible for the 5' incision. The sequence is that of UvrABC system protein C from Mycolicibacterium gilvum (strain PYR-GCK) (Mycobacterium gilvum (strain PYR-GCK)).